A 134-amino-acid chain; its full sequence is Small ribosomal subunit protein bS6 (134 aa).

The tract at residues 97 to 134 (TDVSPIKASEGREDRRSAPQREERNHDNSDEVSEESED) is disordered. Basic and acidic residues predominate over residues 105–125 (SEGREDRRSAPQREERNHDNS).

This sequence belongs to the bacterial ribosomal protein bS6 family.

Its function is as follows. Binds together with bS18 to 16S ribosomal RNA. In Marinomonas sp. (strain MWYL1), this protein is Small ribosomal subunit protein bS6.